A 214-amino-acid polypeptide reads, in one-letter code: Urease accessory protein UreE (214 aa).

Residues 163-214 are disordered; it reads NAEPSGVDHSHEATDSGHGYGEDHDHDHSHDHNHDHDHNHDHDHSHSHDSHE. Over residues 168–214 the composition is skewed to basic and acidic residues; it reads GVDHSHEATDSGHGYGEDHDHDHSHDHNHDHDHNHDHDHSHSHDSHE.

This sequence belongs to the UreE family.

It is found in the cytoplasm. Functionally, involved in urease metallocenter assembly. Binds nickel. Probably functions as a nickel donor during metallocenter assembly. The chain is Urease accessory protein UreE from Natronomonas pharaonis (strain ATCC 35678 / DSM 2160 / CIP 103997 / JCM 8858 / NBRC 14720 / NCIMB 2260 / Gabara) (Halobacterium pharaonis).